The following is a 71-amino-acid chain: Beta-defensin 124 (71 aa).

The signal sequence occupies residues 1-22 (MTQLLLFLVALLVLGHVPSGRS). 3 cysteine pairs are disulfide-bonded: Cys-27–Cys-54, Cys-34–Cys-48, and Cys-38–Cys-55.

It belongs to the beta-defensin family.

The protein resides in the secreted. Has antibacterial activity. This chain is Beta-defensin 124 (DEFB124), found in Homo sapiens (Human).